Reading from the N-terminus, the 1766-residue chain is Putative ATP-dependent RNA helicase R366 (1766 aa).

The segment at 209-239 is disordered; sequence KSSSNQNSNQSNQESNESNQEPNESNQEINQ. A compositionally biased stretch (low complexity) spans 210–239; the sequence is SSSNQNSNQSNQESNESNQEPNESNQEINQ. In terms of domain architecture, Helicase ATP-binding spans 656–865; sequence YHHYSNNRVL…RYYRRINDNR (210 aa). ATP is bound at residue 669-676; sequence GATGVGKS. The DEAH box signature appears at 812–815; the sequence is DEAH. Residues 947–1116 enclose the Helicase C-terminal domain; the sequence is DIHKSIKAIN…TMVKLIKSYP (170 aa).

It belongs to the DEAD box helicase family. DEAH subfamily.

It carries out the reaction ATP + H2O = ADP + phosphate + H(+). This is Putative ATP-dependent RNA helicase R366 from Acanthamoeba polyphaga mimivirus (APMV).